We begin with the raw amino-acid sequence, 442 residues long: uncharacterized protein (442 aa).

Residues 1-23 (MEILLIVLGAVVAGLLCPVQTAA) form the signal peptide. 2 disordered regions span residues 36-67 (TSIS…NSSD) and 91-115 (ANET…TNTR). Over residues 48–67 (TSSGELSQSTFSSSSTNSSD) the composition is skewed to low complexity. Residues N64, N92, N99, N130, N174, N225, N244, N346, N363, N386, and N398 are each glycosylated (N-linked (GlcNAc...) asparagine).

The protein localises to the secreted. This is an uncharacterized protein from Arthroderma benhamiae (strain ATCC MYA-4681 / CBS 112371) (Trichophyton mentagrophytes).